The chain runs to 439 residues: Protein CNPPD1 (439 aa).

The chain crosses the membrane as a helical span at residues 231-251 (CLLGVVYLTGFAAVFTSIAVV). Positions 283–302 (ALAPEQPQPKLPDVSPPSST) are disordered.

The protein belongs to the CNPPD1 family.

It is found in the membrane. This is Protein CNPPD1 (CNPPD1) from Gallus gallus (Chicken).